Here is a 186-residue protein sequence, read N- to C-terminus: Tumor necrosis factor alpha-induced protein 8-like protein 1 (186 aa).

Belongs to the TNFAIP8 family. Interacts with FBXW5; TNFAIP8L1 competes with TSC2 to bind FBXW5 increasing TSC2 stability by preventing its ubiquitination. In terms of tissue distribution, high expression detected in most carcinoma cell lines, especially in cells transformed with virus genomes.

It localises to the cytoplasm. Functionally, acts as a negative regulator of mTOR activity. The polypeptide is Tumor necrosis factor alpha-induced protein 8-like protein 1 (TNFAIP8L1) (Homo sapiens (Human)).